We begin with the raw amino-acid sequence, 359 residues long: Glyceraldehyde-3-phosphate dehydrogenase, glycosomal (359 aa).

Residues 12 to 13 (RI), D38, Q91, and S134 contribute to the NAD(+) site. D-glyceraldehyde 3-phosphate contacts are provided by residues 165 to 167 (SCT), T197, 226 to 227 (TG), and R249. The active-site Nucleophile is the C166. N335 provides a ligand contact to NAD(+). A Microbody targeting signal motif is present at residues 357–359 (ARL).

The protein belongs to the glyceraldehyde-3-phosphate dehydrogenase family. Homotetramer.

Its subcellular location is the glycosome. It catalyses the reaction D-glyceraldehyde 3-phosphate + phosphate + NAD(+) = (2R)-3-phospho-glyceroyl phosphate + NADH + H(+). It participates in carbohydrate degradation; glycolysis; pyruvate from D-glyceraldehyde 3-phosphate: step 1/5. In Trypanosoma cruzi, this protein is Glyceraldehyde-3-phosphate dehydrogenase, glycosomal.